The sequence spans 390 residues: Alanine racemase (390 aa).

Residue Lys-37 is the Proton acceptor; specific for D-alanine of the active site. At Lys-37 the chain carries N6-(pyridoxal phosphate)lysine. Substrate is bound at residue Arg-135. The active-site Proton acceptor; specific for L-alanine is Tyr-274. Met-322 serves as a coordination point for substrate.

The protein belongs to the alanine racemase family. Pyridoxal 5'-phosphate is required as a cofactor.

It carries out the reaction L-alanine = D-alanine. It participates in amino-acid biosynthesis; D-alanine biosynthesis; D-alanine from L-alanine: step 1/1. Functionally, catalyzes the interconversion of L-alanine and D-alanine. May also act on other amino acids. In Desulfosudis oleivorans (strain DSM 6200 / JCM 39069 / Hxd3) (Desulfococcus oleovorans), this protein is Alanine racemase (alr).